The primary structure comprises 269 residues: MVRIAVAGAAGRMGRNLVKAAHHNPAAKVAAGSERPESSLVGVDLGELCGECKFDVVVCDDLAKQIDQFDVIIDFTAPASTLNNLALCQQYGKSIVIGTTGFTEEQREQIDLVAQQVPVVMAPNYSVGVNLVFKLLEKAAKVMGDYCDIEIVEAHHRHKVDAPSGTAIGMGEAIAGAMGNKLSDVAVYAREGITGERTKDEIGFATIRAGDIVGEHTAMFADIGERVEITHKATDRMTFANGAVKAAVWLHEKPAGFYTMTDVLGLNDL.

Residues 8-13 and glutamate 34 contribute to the NAD(+) site; that span reads GAAGRM. Arginine 35 is a binding site for NADP(+). NAD(+) is bound by residues 98–100 and 122–125; these read GTT and APNY. The Proton donor/acceptor role is filled by histidine 155. Histidine 156 serves as a coordination point for (S)-2,3,4,5-tetrahydrodipicolinate. The active-site Proton donor is lysine 159. 165 to 166 lines the (S)-2,3,4,5-tetrahydrodipicolinate pocket; the sequence is GT.

It belongs to the DapB family.

The protein resides in the cytoplasm. It catalyses the reaction (S)-2,3,4,5-tetrahydrodipicolinate + NAD(+) + H2O = (2S,4S)-4-hydroxy-2,3,4,5-tetrahydrodipicolinate + NADH + H(+). The catalysed reaction is (S)-2,3,4,5-tetrahydrodipicolinate + NADP(+) + H2O = (2S,4S)-4-hydroxy-2,3,4,5-tetrahydrodipicolinate + NADPH + H(+). It participates in amino-acid biosynthesis; L-lysine biosynthesis via DAP pathway; (S)-tetrahydrodipicolinate from L-aspartate: step 4/4. In terms of biological role, catalyzes the conversion of 4-hydroxy-tetrahydrodipicolinate (HTPA) to tetrahydrodipicolinate. In Vibrio vulnificus (strain YJ016), this protein is 4-hydroxy-tetrahydrodipicolinate reductase.